The chain runs to 690 residues: Glycine--tRNA ligase 1, mitochondrial (690 aa).

Residues 1–24 (MSFFNISRRFYSQIVKKSVKIKRM) constitute a mitochondrion transit peptide. At S25 the chain carries N-acetylserine. S226 carries the post-translational modification Phosphoserine. Position 251 (E251) interacts with glycine. ATP is bound by residues 283–285 (RNE) and 294–295 (RV). Position 302 (E302) interacts with glycine. 410 to 411 (EC) serves as a coordination point for ATP. A phosphoserine mark is found at S476 and S528. 531-533 (EPS) serves as a coordination point for glycine. R538 is a binding site for ATP. T689 is subject to Phosphothreonine.

The protein belongs to the class-II aminoacyl-tRNA synthetase family. In terms of assembly, homodimer.

Its subcellular location is the cytoplasm. The protein resides in the mitochondrion matrix. The enzyme catalyses tRNA(Gly) + glycine + ATP = glycyl-tRNA(Gly) + AMP + diphosphate. It carries out the reaction 2 ATP + H(+) = P(1),P(4)-bis(5'-adenosyl) tetraphosphate + diphosphate. In terms of biological role, catalyzes the ATP-dependent ligation of glycine to the 3'-end of its cognate tRNA, via the formation of an aminoacyl-adenylate intermediate (Gly-AMP). Also produces diadenosine tetraphosphate (Ap4A), a universal pleiotropic signaling molecule needed for cell regulation pathways, by direct condensation of 2 ATPs. Thereby, may play a special role in Ap4A homeostasis. In Saccharomyces cerevisiae (strain ATCC 204508 / S288c) (Baker's yeast), this protein is Glycine--tRNA ligase 1, mitochondrial (GRS1).